A 399-amino-acid polypeptide reads, in one-letter code: S-adenosylmethionine synthase (399 aa).

135–140 (GEGSTD) contributes to the ATP binding site.

This sequence belongs to the AdoMet synthase 2 family. Mg(2+) serves as cofactor.

The catalysed reaction is L-methionine + ATP + H2O = S-adenosyl-L-methionine + phosphate + diphosphate. The protein operates within amino-acid biosynthesis; S-adenosyl-L-methionine biosynthesis; S-adenosyl-L-methionine from L-methionine: step 1/1. Functionally, catalyzes the formation of S-adenosylmethionine from methionine and ATP. This is S-adenosylmethionine synthase (mat) from Archaeoglobus fulgidus (strain ATCC 49558 / DSM 4304 / JCM 9628 / NBRC 100126 / VC-16).